The chain runs to 736 residues: 3',5'-cyclic-AMP phosphodiesterase 4B (736 aa).

2 disordered regions span residues Q51–L77 and D96–S116. At S56 the chain carries Phosphoserine. S290 carries the phosphoserine modification. In terms of domain architecture, PDEase spans V330–S659. H406 functions as the Proton donor in the catalytic mechanism. H406 is a 3',5'-cyclic AMP binding site. AMP-binding residues include H406 and H410. The Zn(2+) site is built by H410, H446, D447, and D564. 4 residues coordinate AMP: D447, D564, Q615, and F618. Mg(2+) is bound at residue D447. D447 lines the Mn(2+) pocket. Q615 and F618 together coordinate 3',5'-cyclic AMP. Residues S659 and S661 each carry the phosphoserine modification. A disordered region spans residues E685 to T736.

The protein belongs to the cyclic nucleotide phosphodiesterase family. PDE4 subfamily. Interacts with DISC1. It depends on Zn(2+) as a cofactor. Mg(2+) serves as cofactor. Requires Mn(2+) as cofactor. In terms of tissue distribution, widely expressed. Expressed in brain, heart, lung and liver. As to expression, expressed in liver and brain.

The protein localises to the cytoplasm. The protein resides in the cell membrane. The enzyme catalyses 3',5'-cyclic AMP + H2O = AMP + H(+). Its pathway is purine metabolism; 3',5'-cyclic AMP degradation; AMP from 3',5'-cyclic AMP: step 1/1. Its activity is regulated as follows. Inhibited by rolipram. Hydrolyzes the second messenger cAMP, which is a key regulator of many important physiological processes. This Rattus norvegicus (Rat) protein is 3',5'-cyclic-AMP phosphodiesterase 4B.